A 222-amino-acid polypeptide reads, in one-letter code: Collectrin (222 aa).

Residues 1-14 (MLWLLFFLVTAIHA) form the signal peptide. Over 15–141 (DLCRPDAENA…LAPPTDPSVP (127 aa)) the chain is Extracellular. The Collectrin-like domain occupies 21 to 222 (AENAFKVRLS…VTEDERLTPL (202 aa)). 2 N-linked (GlcNAc...) asparagine glycosylation sites follow: asparagine 76 and asparagine 93. The chain crosses the membrane as a helical span at residues 142-162 (IWIIIFGVIFCIVLVATMLLI). Over 163–222 (ISGIRQHRRKNKGPSEMEDSEDKCENVITIENGIPCDPLDMKGGHINDAFVTEDERLTPL) the chain is Cytoplasmic. Threonine 214 and threonine 220 each carry phosphothreonine.

It belongs to the CLTRN family. As to quaternary structure, monomer. Homodimer; dimerization prevents CLTRN cleavage by BACE2. Interacts with SLC6A18; this interaction regulates the trafficking of SLC6A18 to the cell membrane and its amino acid transporter activity. Interacts with SLC6A19; this interaction regulates the trafficking of SLC6A19 to the cell membrane and its amino acid transporter activity. Interacts with SNAPIN. Post-translationally, glycosylated. Glycosylation is required for plasma membrane localization and for its cleavage by BACE2. In terms of processing, proteolytically processed in pancreatic beta cells by BACE2 leading to the generation and extracellular release of soluble CLTRN, and a corresponding cell-associated C-terminal fragment which is later cleaved by gamma-secretase. This shedding process inactivates CLTRN. Three cleavage sites have been identified for BACE2, two clustered sites after Phe-116 and Leu-118 and a more membrane proximal site at Phe-125; the preferred BACE2 cleavage site seems to be between Phe-125 and Leu-126, Phe-116 and Leu-118 act as alternative sites.

The protein resides in the cell membrane. Plays an important role in amino acid transport by acting as binding partner of amino acid transporters SLC6A18 and SLC6A19, regulating their trafficking on the cell surface and their activity. May also play a role in trafficking of amino acid transporters SLC3A1 and SLC7A9 to the renal cortical cell membrane. Regulator of SNARE complex function. Stimulator of beta cell replication. This is Collectrin (CLTRN) from Bos taurus (Bovine).